A 242-amino-acid chain; its full sequence is Uridylate kinase (242 aa).

15–18 (KLSG) serves as a coordination point for ATP. UMP is bound at residue Gly57. ATP is bound by residues Gly58 and Arg62. Residues Asp78 and 139–146 (TGNPFFTT) contribute to the UMP site. 3 residues coordinate ATP: Thr166, Tyr172, and Asp175.

The protein belongs to the UMP kinase family. Homohexamer.

It localises to the cytoplasm. It catalyses the reaction UMP + ATP = UDP + ADP. The protein operates within pyrimidine metabolism; CTP biosynthesis via de novo pathway; UDP from UMP (UMPK route): step 1/1. Inhibited by UTP. Functionally, catalyzes the reversible phosphorylation of UMP to UDP. In Acinetobacter baylyi (strain ATCC 33305 / BD413 / ADP1), this protein is Uridylate kinase.